A 699-amino-acid polypeptide reads, in one-letter code: Elongation factor G 1 (699 aa).

The tr-type G domain occupies 8 to 290; that stretch reads ERYRNIGICA…AVIEYLPSPT (283 aa). Residues 17–24, 88–92, and 142–145 each bind GTP; these read AHVDAGKT, DTPGH, and NKMD.

It belongs to the TRAFAC class translation factor GTPase superfamily. Classic translation factor GTPase family. EF-G/EF-2 subfamily.

It is found in the cytoplasm. Its function is as follows. Catalyzes the GTP-dependent ribosomal translocation step during translation elongation. During this step, the ribosome changes from the pre-translocational (PRE) to the post-translocational (POST) state as the newly formed A-site-bound peptidyl-tRNA and P-site-bound deacylated tRNA move to the P and E sites, respectively. Catalyzes the coordinated movement of the two tRNA molecules, the mRNA and conformational changes in the ribosome. The polypeptide is Elongation factor G 1 (Hahella chejuensis (strain KCTC 2396)).